A 178-amino-acid chain; its full sequence is SCAN domain-containing protein 1 (178 aa).

The interval 1 to 107 is disordered; the sequence is MAATEQSLAP…GSRPGPETFR (107 aa). A compositionally biased stretch (low complexity) spans 9–18; that stretch reads APAGSSAPPS. A compositionally biased stretch (polar residues) spans 36–54; it reads GSSSTPEAPSIPDSSNPSA. The 72-residue stretch at 107–178 folds into the SCAN box domain; the sequence is RQRFRQFRYQ…RRRTDVRITG (72 aa).

In terms of assembly, interacts with ZNF202.

Its subcellular location is the nucleus. Functionally, may regulate transcriptional activity. This chain is SCAN domain-containing protein 1 (SCAND1), found in Bos taurus (Bovine).